Consider the following 415-residue polypeptide: Serine hydroxymethyltransferase (415 aa).

Residues Leu117 and 121–123 (GHL) contribute to the (6S)-5,6,7,8-tetrahydrofolate site. Lys226 carries the post-translational modification N6-(pyridoxal phosphate)lysine. Glu241 lines the (6S)-5,6,7,8-tetrahydrofolate pocket.

This sequence belongs to the SHMT family. In terms of assembly, homodimer. The cofactor is pyridoxal 5'-phosphate.

The protein localises to the cytoplasm. The catalysed reaction is (6R)-5,10-methylene-5,6,7,8-tetrahydrofolate + glycine + H2O = (6S)-5,6,7,8-tetrahydrofolate + L-serine. It functions in the pathway one-carbon metabolism; tetrahydrofolate interconversion. The protein operates within amino-acid biosynthesis; glycine biosynthesis; glycine from L-serine: step 1/1. In terms of biological role, catalyzes the reversible interconversion of serine and glycine with tetrahydrofolate (THF) serving as the one-carbon carrier. This reaction serves as the major source of one-carbon groups required for the biosynthesis of purines, thymidylate, methionine, and other important biomolecules. Also exhibits THF-independent aldolase activity toward beta-hydroxyamino acids, producing glycine and aldehydes, via a retro-aldol mechanism. In Bacillus pumilus (strain SAFR-032), this protein is Serine hydroxymethyltransferase.